Consider the following 260-residue polypeptide: Endonuclease NucS (260 aa).

It belongs to the NucS endonuclease family.

It localises to the cytoplasm. Cleaves both 3' and 5' ssDNA extremities of branched DNA structures. This chain is Endonuclease NucS, found in Methanopyrus kandleri (strain AV19 / DSM 6324 / JCM 9639 / NBRC 100938).